The primary structure comprises 476 residues: Aspartyl/glutamyl-tRNA(Asn/Gln) amidotransferase subunit B (476 aa).

This sequence belongs to the GatB/GatE family. GatB subfamily. Heterotrimer of A, B and C subunits.

It carries out the reaction L-glutamyl-tRNA(Gln) + L-glutamine + ATP + H2O = L-glutaminyl-tRNA(Gln) + L-glutamate + ADP + phosphate + H(+). The catalysed reaction is L-aspartyl-tRNA(Asn) + L-glutamine + ATP + H2O = L-asparaginyl-tRNA(Asn) + L-glutamate + ADP + phosphate + 2 H(+). In terms of biological role, allows the formation of correctly charged Asn-tRNA(Asn) or Gln-tRNA(Gln) through the transamidation of misacylated Asp-tRNA(Asn) or Glu-tRNA(Gln) in organisms which lack either or both of asparaginyl-tRNA or glutaminyl-tRNA synthetases. The reaction takes place in the presence of glutamine and ATP through an activated phospho-Asp-tRNA(Asn) or phospho-Glu-tRNA(Gln). The sequence is that of Aspartyl/glutamyl-tRNA(Asn/Gln) amidotransferase subunit B from Clostridium botulinum (strain Loch Maree / Type A3).